We begin with the raw amino-acid sequence, 919 residues long: MLX-interacting protein (919 aa).

Residues 1–72 (MAADVFMCSP…AGPGREEPPR (72 aa)) are disordered. A2 carries the N-acetylalanine modification. Phosphoserine occurs at positions 9, 27, 33, and 39. A compositionally biased stretch (acidic residues) spans 27-37 (SEDDDDSDTDE). A compositionally biased stretch (low complexity) spans 44–56 (SGAATPARAHASA). A required for cytoplasmic localization region spans residues 73 to 327 (RQQIIHSGHF…PLQPNLDFMD (255 aa)). Residues 322 to 445 (NLDFMDTFEP…LLSPSPAPPP (124 aa)) are transactivation domain. Disordered stretches follow at residues 542–562 (KPVSLTGGRPKQPHKIVPAPK) and 633–712 (DLGH…SDPK). Residue S669 is modified to Phosphoserine. A compositionally biased stretch (polar residues) spans 670–685 (PQVTVTGPSRDCPNSG). The segment covering 686–706 (QASPCASEQSPSPQSPQNNCS) has biased composition (low complexity). The 51-residue stretch at 719–769 (NRQMKHISAEQKRRFNIKMCFDMLNSLISNNSKLTSHAITLQKTVEYITKL) folds into the bHLH domain. Residues 769–790 (LQQERGQMQEEARRLREEIEEL) form a leucine-zipper region. The mediates heterotypic interactions between MLXIP and MLX and is required for cytoplasmic localization stretch occupies residues 832–881 (WKFWIFSIIIKPLFESFKGMVSTSSLEELHRTALSWLDQHCSLPILRPMV).

Efficient DNA binding requires dimerization with another bHLH protein. Binds DNA as a homodimer or a heterodimer with MLX. Widely expressed in adult tissues. Most abundant in skeletal muscle.

The protein resides in the cytoplasm. It is found in the nucleus. Its subcellular location is the mitochondrion outer membrane. Binds DNA as a heterodimer with MLX and activates transcription. Binds to the canonical E box sequence 5'-CACGTG-3'. Plays a role in transcriptional activation of glycolytic target genes. Involved in glucose-responsive gene regulation. This chain is MLX-interacting protein, found in Homo sapiens (Human).